The primary structure comprises 263 residues: uncharacterized protein (263 aa).

31–38 contacts ATP; the sequence is GPTGSGKT.

This sequence belongs to the CbbQ/NirQ/NorQ/GpvN family.

This is an uncharacterized protein from Staphylococcus saprophyticus subsp. saprophyticus (strain ATCC 15305 / DSM 20229 / NCIMB 8711 / NCTC 7292 / S-41).